The primary structure comprises 374 residues: 4-hydroxybenzoate polyprenyltransferase, mitochondrial (374 aa).

The transit peptide at 1-34 (MLRWGGAGLARGLRAVRSAWLRGPRGLPLALVRS) directs the protein to the mitochondrion. The Mitochondrial matrix portion of the chain corresponds to 35-83 (AGVPGARDRRAPAPGTQRGRALSLSAAAVVNSAPRPLQPYLRLMRLDKP). A helical transmembrane segment spans residues 84–104 (IGTWLLYLPCTWSIGLAADPG). Residues 105–108 (CFPD) are Mitochondrial intermembrane-facing. Residues 109–129 (WYMLSLFGTGAILMRGAGCTI) traverse the membrane as a helical segment. Residues 130–148 (NDMWDRDFDKKVTRTANRP) are Mitochondrial matrix-facing. Residues 149-169 (IAAGDISTFQSFVFLGGQLTL) traverse the membrane as a helical segment. The Mitochondrial intermembrane portion of the chain corresponds to 170–172 (ALG). Residues 173-193 (VLLCLNYYSIAMGAASLLLVV) traverse the membrane as a helical segment. The Mitochondrial matrix portion of the chain corresponds to 194–200 (TYPLVKR). The chain crosses the membrane as a helical span at residues 201–221 (ITFWPQLALGLTFNWGALLGW). Residues 222-230 (SAVKGSCDP) are Mitochondrial intermembrane-facing. A helical transmembrane segment spans residues 231 to 251 (AVCLPLYFSGVMWTLIYDTIY). Over 252–277 (AHQDKKDDALIGLKSTALLFQENTRQ) the chain is Mitochondrial matrix. Residues 278-298 (WLSGFGVAMVAALSLAGANNG) form a helical membrane-spanning segment. Over 299–332 (QTVPYYAAVAAVGAHLAHQIYTVDIHRAEDCWDK) the chain is Mitochondrial intermembrane. A helical transmembrane segment spans residues 333–353 (FTSNRTVGMLLFLGIVLGNLC). At 354–374 (KEKTEEAKDAEAVRVGSEQTS) the chain is on the mitochondrial matrix side.

Belongs to the UbiA prenyltransferase family. Requires Mg(2+) as cofactor.

It localises to the mitochondrion inner membrane. The catalysed reaction is an all-trans-polyprenyl diphosphate + 4-hydroxybenzoate = a 4-hydroxy-3-(all-trans-polyprenyl)benzoate + diphosphate. The enzyme catalyses all-trans-decaprenyl diphosphate + 4-hydroxybenzoate = 4-hydroxy-3-(all-trans-decaprenyl)benzoate + diphosphate. It carries out the reaction all-trans-nonaprenyl diphosphate + 4-hydroxybenzoate = 4-hydroxy-3-(all-trans-nonaprenyl)benzoate + diphosphate. Its pathway is cofactor biosynthesis; ubiquinone biosynthesis. Mediates the second step in the final reaction sequence of coenzyme Q (CoQ) biosynthesis. Catalyzes the prenylation of para-hydroxybenzoate (PHB) with an all-trans polyprenyl donor (such as all-trans-nonaprenyl diphosphate). The length of the polyprenyl side chain varies depending on the species, in humans, the side chain is comprised of 10 isoprenyls producing CoQ10 (also known as ubiquinone), whereas rodents predominantly generate CoQ9. However, this specificity is not complete, human tissues have low amounts of CoQ9 and rodent organs contain some CoQ10. Plays a central role in the biosynthesis of CoQ9. CoQ9 is a vital molecule that transports electrons from mitochondrial respiratory chain complexes. CoQs also function as cofactors for uncoupling protein and play a role as regulators of the extracellularly-induced ceramide-dependent apoptotic pathway. Regulates mitochondrial permeability transition pore (mPTP) opening and ROS production (pivotal events in cell death) in a tissue specific manner. The protein is 4-hydroxybenzoate polyprenyltransferase, mitochondrial of Mus musculus (Mouse).